Reading from the N-terminus, the 277-residue chain is Thymidylate synthase (277 aa).

Arg-21 contributes to the dUMP binding site. Residue His-51 participates in (6R)-5,10-methylene-5,6,7,8-tetrahydrofolate binding. Arg-126–Arg-127 contributes to the dUMP binding site. Cys-159 (nucleophile) is an active-site residue. Residues Arg-179–Asp-182, Asn-190, and His-220–Tyr-222 each bind dUMP. Asp-182 serves as a coordination point for (6R)-5,10-methylene-5,6,7,8-tetrahydrofolate. Ser-276 is a (6R)-5,10-methylene-5,6,7,8-tetrahydrofolate binding site.

The protein belongs to the thymidylate synthase family. Bacterial-type ThyA subfamily. Homodimer.

The protein localises to the cytoplasm. The catalysed reaction is dUMP + (6R)-5,10-methylene-5,6,7,8-tetrahydrofolate = 7,8-dihydrofolate + dTMP. It participates in pyrimidine metabolism; dTTP biosynthesis. In terms of biological role, catalyzes the reductive methylation of 2'-deoxyuridine-5'-monophosphate (dUMP) to 2'-deoxythymidine-5'-monophosphate (dTMP) while utilizing 5,10-methylenetetrahydrofolate (mTHF) as the methyl donor and reductant in the reaction, yielding dihydrofolate (DHF) as a by-product. This enzymatic reaction provides an intracellular de novo source of dTMP, an essential precursor for DNA biosynthesis. The sequence is that of Thymidylate synthase from Saccharophagus degradans (strain 2-40 / ATCC 43961 / DSM 17024).